The sequence spans 163 residues: Glutathione peroxidase 1 (163 aa).

Cysteine 36 is an active-site residue.

Belongs to the glutathione peroxidase family.

Its subcellular location is the cytoplasm. It catalyses the reaction 2 glutathione + H2O2 = glutathione disulfide + 2 H2O. In terms of biological role, may constitute a glutathione peroxidase-like protective system against oxidative stresses. This chain is Glutathione peroxidase 1 (gpx-1), found in Caenorhabditis elegans.